The primary structure comprises 316 residues: Zinc finger protein 367 (316 aa).

Residues 61–97 (VTLGPGSGSGAASPTRTSSSPAEADPLSCPEHLKDGI) form a disordered region. The span at 70–82 (GAASPTRTSSSPA) shows a compositional bias: low complexity. C2H2-type zinc fingers lie at residues 121–143 (IRCN…KRTH) and 149–173 (YLCD…QRLH). A disordered region spans residues 234-294 (QTREQRSPVP…GGVVTARRRL (61 aa)). Acidic residues predominate over residues 255–278 (EDQEQQDPLDFLPSDEGEEEEQEE). Positions 289–313 (TARRRLQEQRERLHGALALIELANN) form a coiled coil.

This sequence belongs to the krueppel C2H2-type zinc-finger protein family.

It localises to the nucleus. Its function is as follows. Transcriptional activator. In Danio rerio (Zebrafish), this protein is Zinc finger protein 367 (znf367).